The sequence spans 295 residues: Tyrosine recombinase XerC (295 aa).

The Core-binding (CB) domain maps to 1-85 (MQNALQKYYD…ALRQFLAYLV (85 aa)). Positions 106–285 (YLPKNIDQEQ…DFKHLTDVYD (180 aa)) constitute a Tyr recombinase domain. Catalysis depends on residues Arg-145, Lys-169, His-237, Arg-240, and His-263. Tyr-272 (O-(3'-phospho-DNA)-tyrosine intermediate) is an active-site residue.

Belongs to the 'phage' integrase family. XerC subfamily. As to quaternary structure, forms a cyclic heterotetrameric complex composed of two molecules of XerC and two molecules of XerD.

The protein localises to the cytoplasm. In terms of biological role, site-specific tyrosine recombinase, which acts by catalyzing the cutting and rejoining of the recombining DNA molecules. The XerC-XerD complex is essential to convert dimers of the bacterial chromosome into monomers to permit their segregation at cell division. It also contributes to the segregational stability of plasmids. The polypeptide is Tyrosine recombinase XerC (Actinobacillus succinogenes (strain ATCC 55618 / DSM 22257 / CCUG 43843 / 130Z)).